We begin with the raw amino-acid sequence, 177 residues long: Peptide methionine sulfoxide reductase MsrA (177 aa).

Cys12 is a catalytic residue.

This sequence belongs to the MsrA Met sulfoxide reductase family.

The catalysed reaction is L-methionyl-[protein] + [thioredoxin]-disulfide + H2O = L-methionyl-(S)-S-oxide-[protein] + [thioredoxin]-dithiol. It carries out the reaction [thioredoxin]-disulfide + L-methionine + H2O = L-methionine (S)-S-oxide + [thioredoxin]-dithiol. Functionally, has an important function as a repair enzyme for proteins that have been inactivated by oxidation. Catalyzes the reversible oxidation-reduction of methionine sulfoxide in proteins to methionine. This Halobacterium salinarum (strain ATCC 29341 / DSM 671 / R1) protein is Peptide methionine sulfoxide reductase MsrA.